The chain runs to 509 residues: GRAS family protein RAD1 (509 aa).

Residues 125 to 508 (EDGCADGMRL…KPIVAASCWK (384 aa)) enclose the GRAS domain. The leucine repeat I (LRI) stretch occupies residues 132-198 (MRLVQLLIAC…IQPIGSGAGV (67 aa)). A VHIID region spans residues 217 to 286 (YRLVYETCPH…SGHGRVRRLR (70 aa)). Residues 248 to 252 (VHVVD) carry the VHIID motif. Residues 299 to 331 (AIGDELSDYANNLGINLEFSVVQKNLENLQPED) form a leucine repeat II (LRII) region. The tract at residues 340–431 (LVVNSILQLH…QFYFAEEIKN (92 aa)) is PFYRE. The interval 434–508 (SCEGPLRMER…KPIVAASCWK (75 aa)) is SAW.

Belongs to the GRAS family. As to quaternary structure, interacts with RAM1 and NSP2. Expressed in roots under low phosphate (Pi) conditions.

Its subcellular location is the nucleus. Functionally, transcription factor acting as a regulator of arbuscular mycorrhiza (AM)-related genes (e.g. PT4, STR and RAM2). Required for the morphogenesis of arbuscules upon symbiosis with AM fungi (e.g. Rhizophagus irregularis). Also involved in restricting mycorrhizal colonization of the root meristem. The protein is GRAS family protein RAD1 of Lotus japonicus (Lotus corniculatus var. japonicus).